A 378-amino-acid polypeptide reads, in one-letter code: Erythronate-4-phosphate dehydrogenase (378 aa).

The substrate site is built by serine 45 and threonine 66. The NAD(+) site is built by aspartate 146 and threonine 175. Residue arginine 208 is part of the active site. Residue aspartate 232 participates in NAD(+) binding. Residue glutamate 237 is part of the active site. Histidine 254 acts as the Proton donor in catalysis. Glycine 257 provides a ligand contact to NAD(+). Tyrosine 258 contributes to the substrate binding site.

This sequence belongs to the D-isomer specific 2-hydroxyacid dehydrogenase family. PdxB subfamily. Homodimer.

The protein localises to the cytoplasm. The enzyme catalyses 4-phospho-D-erythronate + NAD(+) = (R)-3-hydroxy-2-oxo-4-phosphooxybutanoate + NADH + H(+). The protein operates within cofactor biosynthesis; pyridoxine 5'-phosphate biosynthesis; pyridoxine 5'-phosphate from D-erythrose 4-phosphate: step 2/5. In terms of biological role, catalyzes the oxidation of erythronate-4-phosphate to 3-hydroxy-2-oxo-4-phosphonooxybutanoate. This Salmonella arizonae (strain ATCC BAA-731 / CDC346-86 / RSK2980) protein is Erythronate-4-phosphate dehydrogenase.